Reading from the N-terminus, the 352-residue chain is Thiamine-phosphate synthase (352 aa).

Residues 1 to 128 (MNPTPSETSL…AAEAAAIRYG (128 aa)) form a unknown region. Positions 63–85 (SYKQARSTSTDTGAGLKHPAQLD) are disordered. The segment at 129 to 352 (LYDLEVTCLN…LLQQLDQATI (224 aa)) is thiamine-phosphate synthase. Residues 180–184 (QYRCK) and asparagine 212 contribute to the 4-amino-2-methyl-5-(diphosphooxymethyl)pyrimidine site. The Mg(2+) site is built by aspartate 213 and aspartate 232. 2 residues coordinate 4-amino-2-methyl-5-(diphosphooxymethyl)pyrimidine: serine 251 and lysine 280. Glycine 307 lines the 2-[(2R,5Z)-2-carboxy-4-methylthiazol-5(2H)-ylidene]ethyl phosphate pocket.

Belongs to the thiamine-phosphate synthase family. Mg(2+) serves as cofactor.

The catalysed reaction is 2-[(2R,5Z)-2-carboxy-4-methylthiazol-5(2H)-ylidene]ethyl phosphate + 4-amino-2-methyl-5-(diphosphooxymethyl)pyrimidine + 2 H(+) = thiamine phosphate + CO2 + diphosphate. It carries out the reaction 2-(2-carboxy-4-methylthiazol-5-yl)ethyl phosphate + 4-amino-2-methyl-5-(diphosphooxymethyl)pyrimidine + 2 H(+) = thiamine phosphate + CO2 + diphosphate. The enzyme catalyses 4-methyl-5-(2-phosphooxyethyl)-thiazole + 4-amino-2-methyl-5-(diphosphooxymethyl)pyrimidine + H(+) = thiamine phosphate + diphosphate. It functions in the pathway cofactor biosynthesis; thiamine diphosphate biosynthesis; thiamine phosphate from 4-amino-2-methyl-5-diphosphomethylpyrimidine and 4-methyl-5-(2-phosphoethyl)-thiazole: step 1/1. Condenses 4-methyl-5-(beta-hydroxyethyl)thiazole monophosphate (THZ-P) and 2-methyl-4-amino-5-hydroxymethyl pyrimidine pyrophosphate (HMP-PP) to form thiamine monophosphate (TMP). This Synechococcus sp. (strain CC9605) protein is Thiamine-phosphate synthase.